A 211-amino-acid chain; its full sequence is Ribosomal RNA small subunit methyltransferase G (211 aa).

Residues glycine 81, leucine 86, 132–133 (AE), and arginine 147 each bind S-adenosyl-L-methionine.

Belongs to the methyltransferase superfamily. RNA methyltransferase RsmG family.

It is found in the cytoplasm. It carries out the reaction guanosine(527) in 16S rRNA + S-adenosyl-L-methionine = N(7)-methylguanosine(527) in 16S rRNA + S-adenosyl-L-homocysteine. Functionally, specifically methylates the N7 position of guanine in position 527 of 16S rRNA. This is Ribosomal RNA small subunit methyltransferase G from Dichelobacter nodosus (strain VCS1703A).